A 1165-amino-acid chain; its full sequence is Protein hsr-9 (1165 aa).

Disordered regions lie at residues 1–26 (MASS…PTTT), 70–578 (AEDE…TEME), 608–713 (KYSM…IPLK), and 874–913 (TRAR…EEEE). Positions 16-26 (TVTQTSLPTTT) are enriched in low complexity. Basic and acidic residues-rich tracts occupy residues 98–114 (KDAK…KSES), 123–140 (TFEK…KLDI), and 149–162 (DTEK…KVVG). 3 stretches are compositionally biased toward acidic residues: residues 163-179 (DEDE…DEDE), 211-230 (EKEE…EVEV), and 280-289 (GESEANEENQ). A compositionally biased stretch (polar residues) spans 306-317 (ATVSSTPSSNTP). Basic and acidic residues predominate over residues 397–408 (NTEHPTEEETPK). Over residues 415-431 (SAASSSATSSAVPTPRS) the composition is skewed to low complexity. The segment covering 446 to 461 (LQEKETEDPTKTHDTN) has biased composition (basic and acidic residues). The span at 533–543 (DPIEEADETIE) shows a compositional bias: acidic residues. Positions 554–563 (AAKSAPSSSK) are enriched in low complexity. Composition is skewed to basic and acidic residues over residues 662 to 671 (KKEEEHHEND) and 694 to 708 (SEAS…KKEP). Residues 923 to 1028 (IGKNIFTGKV…KCVDYTDYVL (106 aa)) form the BRCT domain.

In terms of tissue distribution, expressed in germ cells.

It is found in the nucleus. May have a role in DNA double-strand break repair following gamma-irradiation. This chain is Protein hsr-9, found in Caenorhabditis elegans.